The following is a 454-amino-acid chain: Growth/differentiation factor 6 (454 aa).

The first 22 residues, 1-22 (MDTPRVLLWAIFLISFLWDLPG), serve as a signal peptide directing secretion. A propeptide spanning residues 23–334 (FQQASISSSS…LPSPGRRRRR (312 aa)) is cleaved from the precursor. Residues 28–93 (ISSSSSSSTE…QGQEPPGRGL (66 aa)) are disordered. Basic and acidic residues-rich tracts occupy residues 39–52 (DSTK…EGKM) and 60–73 (AEGR…LRQK). Positions 81–92 (GQHQGQEPPGRG) are enriched in low complexity. Residue Asn117 is glycosylated (N-linked (GlcNAc...) asparagine). 2 disordered regions span residues 247 to 268 (DTGA…SLGF) and 303 to 350 (AEAA…KKSR). A compositionally biased stretch (low complexity) spans 303 to 319 (AEAAGAEGSWPAPSGSP). Over residues 329–350 (GRRRRRTAFASRHGKRHGKKSR) the composition is skewed to basic residues. 3 disulfides stabilise this stretch: Cys353-Cys419, Cys382-Cys451, and Cys386-Cys453.

Belongs to the TGF-beta family. In terms of assembly, homodimer; disulfide-linked. Expressed in different subsets of developing joints. Highly expressed in the cochlea.

It is found in the secreted. Growth factor that controls proliferation and cellular differentiation in the retina and bone formation. Plays a key role in regulating apoptosis during retinal development. Establishes dorsal-ventral positional information in the retina and controls the formation of the retinotectal map. Required for normal formation of bones and joints in the limbs, skull, digits and axial skeleton. Plays a key role in establishing boundaries between skeletal elements during development. Regulation of GDF6 expression seems to be a mechanism for evolving species-specific changes in skeletal structures. Seems to positively regulate differentiation of chondrogenic tissue through the growth factor receptors subunits BMPR1A, BMPR1B, BMPR2 and ACVR2A, leading to the activation of SMAD1-SMAD5-SMAD8 complex. The regulation of chondrogenic differentiation is inhibited by NOG. Also involved in the induction of adipogenesis from mesenchymal stem cells. This mechanism acts through the growth factor receptors subunits BMPR1A, BMPR2 and ACVR2A and the activation of SMAD1-SMAD5-SMAD8 complex and MAPK14/p38. This chain is Growth/differentiation factor 6 (Gdf6), found in Mus musculus (Mouse).